The chain runs to 212 residues: Thiamine-phosphate synthase (212 aa).

Residues 39–41 (QLR) and N71 contribute to the 4-amino-2-methyl-5-(diphosphooxymethyl)pyrimidine site. 2 residues coordinate Mg(2+): D72 and D91. Residue S110 participates in 4-amino-2-methyl-5-(diphosphooxymethyl)pyrimidine binding. 2-[(2R,5Z)-2-carboxy-4-methylthiazol-5(2H)-ylidene]ethyl phosphate is bound at residue 136–138 (TGT). K139 contacts 4-amino-2-methyl-5-(diphosphooxymethyl)pyrimidine. 2-[(2R,5Z)-2-carboxy-4-methylthiazol-5(2H)-ylidene]ethyl phosphate-binding positions include G167 and 187–188 (VS).

It belongs to the thiamine-phosphate synthase family. Requires Mg(2+) as cofactor.

The catalysed reaction is 2-[(2R,5Z)-2-carboxy-4-methylthiazol-5(2H)-ylidene]ethyl phosphate + 4-amino-2-methyl-5-(diphosphooxymethyl)pyrimidine + 2 H(+) = thiamine phosphate + CO2 + diphosphate. The enzyme catalyses 2-(2-carboxy-4-methylthiazol-5-yl)ethyl phosphate + 4-amino-2-methyl-5-(diphosphooxymethyl)pyrimidine + 2 H(+) = thiamine phosphate + CO2 + diphosphate. It carries out the reaction 4-methyl-5-(2-phosphooxyethyl)-thiazole + 4-amino-2-methyl-5-(diphosphooxymethyl)pyrimidine + H(+) = thiamine phosphate + diphosphate. It participates in cofactor biosynthesis; thiamine diphosphate biosynthesis; thiamine phosphate from 4-amino-2-methyl-5-diphosphomethylpyrimidine and 4-methyl-5-(2-phosphoethyl)-thiazole: step 1/1. Its function is as follows. Condenses 4-methyl-5-(beta-hydroxyethyl)thiazole monophosphate (THZ-P) and 2-methyl-4-amino-5-hydroxymethyl pyrimidine pyrophosphate (HMP-PP) to form thiamine monophosphate (TMP). The protein is Thiamine-phosphate synthase of Azorhizobium caulinodans (strain ATCC 43989 / DSM 5975 / JCM 20966 / LMG 6465 / NBRC 14845 / NCIMB 13405 / ORS 571).